Reading from the N-terminus, the 284-residue chain is MIIESRIEKGNPVVGMETTVFVHGLPRKEAIELFRRAKEISREKGFQLVVIGILKGKIIVGMSEEELETMMREGADKIGTREIPIAVAKGKNAATTVSATIFLSRRIGIEVVVTGGTGGVHPGRVDVSQDLTEMASSRTILVSSGIKSILDVEATFEMLETLEIPLVGFKTDEFPLFFSRKSGRRVPRVESVEEVLKIYETMREIGFEKTLMVLNPVPEEYEVPHDEIERLLEKIELEAEGKEVTPFLLKKLAEMTNGRTLKANLALLEENVKLAGEIAMKLKR.

The Proton donor role is filled by Glu-17. Substrate contacts are provided by Lys-77 and Val-97. Residue Asp-126 participates in Mn(2+) binding. 128-130 serves as a coordination point for substrate; it reads SQD. Lys-147 acts as the Nucleophile in catalysis.

Belongs to the pseudouridine-5'-phosphate glycosidase family. In terms of assembly, homotrimer. Mn(2+) is required as a cofactor.

The enzyme catalyses D-ribose 5-phosphate + uracil = psi-UMP + H2O. Its function is as follows. Catalyzes the reversible cleavage of pseudouridine 5'-phosphate (PsiMP) to ribose 5-phosphate and uracil. Functions biologically in the cleavage direction, as part of a pseudouridine degradation pathway. The polypeptide is Pseudouridine-5'-phosphate glycosidase (Thermotoga petrophila (strain ATCC BAA-488 / DSM 13995 / JCM 10881 / RKU-1)).